Consider the following 338-residue polypeptide: MIAKSIVDCIGGTPLVQLARLYDGRKAEVFAKLEMLNPAGSIKDRPARYIIERGLAEGSIAPGTHIIESSSGNLAIALAMVCRIKGLRFTAVVDPKISPTNLKILRCYGAGIERVTRKDSQGGYLETRIERVRQMLASEPGAVWINQYGNPRNWESHFHGEGDEIARALDRPADMLVLGVSTSGTVLGIARRLRREWPGLRVVAVDAVGSVLFGAKPGPRELPGIGASRVPELLCRDDIDDVIHVDDYDAAMGCRRLLEREGIFAGGSSGAVVVAIDRLLARATRPLRIVTLLPDRGERYLDSVYDDEWLARIAASRAGGAVSAASPSLHVPSLEEVL.

The residue at position 43 (Lys43) is an N6-(pyridoxal phosphate)lysine. Residues Asn73, 181–185, and Ser268 each bind pyridoxal 5'-phosphate; that span reads STSGT.

Belongs to the cysteine synthase/cystathionine beta-synthase family. SbnA subfamily. In terms of assembly, homodimer. It depends on pyridoxal 5'-phosphate as a cofactor.

It catalyses the reaction O-phospho-L-serine + L-glutamate = N-[(2S)-2-amino-2-carboxyethyl]-L-glutamate + phosphate + H(+). It participates in siderophore biosynthesis. Catalyzes the synthesis of N-((2S)-2-amino-2-carboxyethyl)-L-glutamate (ACEGA) from O-phospho-L-serine and L-glutamate. In Ralstonia nicotianae (strain ATCC BAA-1114 / GMI1000) (Ralstonia solanacearum), this protein is N-(2-amino-2-carboxyethyl)-L-glutamate synthase (sbnA).